Consider the following 514-residue polypeptide: Cytochrome P450 monooxygenase FUS8 (514 aa).

The helical transmembrane segment at 28–48 (LTVTKAVGAFIVLFIIIPKVF) threads the bilayer. Residues Asn-225 and Asn-443 are each glycosylated (N-linked (GlcNAc...) asparagine). Position 460 (Cys-460) interacts with heme.

This sequence belongs to the cytochrome P450 family. The cofactor is heme.

It localises to the membrane. The protein operates within mycotoxin biosynthesis. Its function is as follows. Cytochrome P450 monooxygenase; part of the gene cluster that mediates the biosynthesis of the mycotoxin fusarin C. Within the cluster, FUS1, FUS2, FUS8 and FUS9 are sufficient for fusarin production. The roles of the other FUS members are yet undetermined. The fusarin C synthetase FUS1 is responsible for the condensation of one acetyl-coenzyme A (CoA) unit with six malonyl-CoA units and the amide linkage of the arising heptaketide and homoserine, subsequently releasing the first intermediate, prefusarin, as an alcohol with an open ring structure. The cytochrome P450 monooxygenase FUS8 participates in multiple oxidation processes at carbon C-20 and is able to use the FUS1 product as substrate, resulting in formation of 20-hydroxy-prefusarin. This reaction seems to be essential before the 2-pyrrolidone ring closure can be catalyzed by FUS2, generating 20-hydroxy-fusarin. FUS8 is able to further oxidizes carbon C-20 after ring closure, resulting in the formation of carboxy-fusarin C. As the last step, FUS9 methylates the hydroxyl group at C-21 to generate fusarin C. Fusarin C can then rearrange to epi-fusarin C, the (z)-isomers, and fusarin A and fusarin D. This is Cytochrome P450 monooxygenase FUS8 from Gibberella moniliformis (strain M3125 / FGSC 7600) (Maize ear and stalk rot fungus).